Consider the following 257-residue polypeptide: Imidazole glycerol phosphate synthase subunit HisF (257 aa).

Catalysis depends on residues Asp11 and Asp130.

The protein belongs to the HisA/HisF family. As to quaternary structure, heterodimer of HisH and HisF.

The protein resides in the cytoplasm. It carries out the reaction 5-[(5-phospho-1-deoxy-D-ribulos-1-ylimino)methylamino]-1-(5-phospho-beta-D-ribosyl)imidazole-4-carboxamide + L-glutamine = D-erythro-1-(imidazol-4-yl)glycerol 3-phosphate + 5-amino-1-(5-phospho-beta-D-ribosyl)imidazole-4-carboxamide + L-glutamate + H(+). It participates in amino-acid biosynthesis; L-histidine biosynthesis; L-histidine from 5-phospho-alpha-D-ribose 1-diphosphate: step 5/9. In terms of biological role, IGPS catalyzes the conversion of PRFAR and glutamine to IGP, AICAR and glutamate. The HisF subunit catalyzes the cyclization activity that produces IGP and AICAR from PRFAR using the ammonia provided by the HisH subunit. This is Imidazole glycerol phosphate synthase subunit HisF from Vibrio cholerae serotype O1 (strain ATCC 39541 / Classical Ogawa 395 / O395).